We begin with the raw amino-acid sequence, 237 residues long: Proteasome subunit beta type-1 (237 aa).

The protein belongs to the peptidase T1B family. As to quaternary structure, the 26S proteasome consists of a 20S proteasome core and two 19S regulatory subunits. The 20S proteasome core is a barrel-shaped complex made of 28 subunits that are arranged in four stacked rings. The two outer rings are each formed by seven alpha subunits, and the two inner rings are formed by seven beta subunits. The proteolytic activity is exerted by three beta-subunits psmb5, psmb6 and psmb7.

It localises to the cytoplasm. The protein resides in the nucleus. Non-catalytic component of the 20S core proteasome complex involved in the proteolytic degradation of most intracellular proteins. This complex plays numerous essential roles within the cell by associating with different regulatory particles. Associated with two 19S regulatory particles, forms the 26S proteasome and thus participates in the ATP-dependent degradation of ubiquitinated proteins. The 26S proteasome plays a key role in the maintenance of protein homeostasis by removing misfolded or damaged proteins that could impair cellular functions, and by removing proteins whose functions are no longer required. Associated with the PA200 or PA28, the 20S proteasome mediates ubiquitin-independent protein degradation. In Danio rerio (Zebrafish), this protein is Proteasome subunit beta type-1.